Reading from the N-terminus, the 261-residue chain is NAD-capped RNA hydrolase NudC (261 aa).

Arg-69 serves as a coordination point for substrate. Positions 98 and 101 each coordinate Zn(2+). Residue Glu-111 coordinates substrate. The Zn(2+) site is built by Cys-116 and Cys-119. Substrate is bound at residue Tyr-124. The region spanning 125-248 (PQIAPCIIVA…TVARRLIEDT (124 aa)) is the Nudix hydrolase domain. A divalent metal cation contacts are provided by Ala-158, Glu-174, and Glu-178. Residues 159-180 (GFVEVGETLEQTVAREVMEESS) carry the Nudix box motif. 192 to 199 (QPWPFPQS) is a binding site for substrate. Residue Glu-219 participates in a divalent metal cation binding. Substrate is bound at residue Ala-241.

This sequence belongs to the Nudix hydrolase family. NudC subfamily. In terms of assembly, homodimer. The cofactor is Mg(2+). Mn(2+) is required as a cofactor. It depends on Zn(2+) as a cofactor.

It carries out the reaction a 5'-end NAD(+)-phospho-ribonucleoside in mRNA + H2O = a 5'-end phospho-adenosine-phospho-ribonucleoside in mRNA + beta-nicotinamide D-ribonucleotide + 2 H(+). The catalysed reaction is NAD(+) + H2O = beta-nicotinamide D-ribonucleotide + AMP + 2 H(+). It catalyses the reaction NADH + H2O = reduced beta-nicotinamide D-ribonucleotide + AMP + 2 H(+). Functionally, mRNA decapping enzyme that specifically removes the nicotinamide adenine dinucleotide (NAD) cap from a subset of mRNAs by hydrolyzing the diphosphate linkage to produce nicotinamide mononucleotide (NMN) and 5' monophosphate mRNA. The NAD-cap is present at the 5'-end of some mRNAs and stabilizes RNA against 5'-processing. Has preference for mRNAs with a 5'-end purine. Catalyzes the hydrolysis of a broad range of dinucleotide pyrophosphates. The protein is NAD-capped RNA hydrolase NudC of Erwinia tasmaniensis (strain DSM 17950 / CFBP 7177 / CIP 109463 / NCPPB 4357 / Et1/99).